Here is a 373-residue protein sequence, read N- to C-terminus: Protein CAF40 (373 aa).

The interval 1–91 (MFSAQKPIYG…ANATRNNPNM (91 aa)) is disordered. A compositionally biased stretch (gly residues) spans 11 to 22 (NGAGVNMGGGGP). Low complexity predominate over residues 50 to 88 (GGPMLMGNTPNNNNSNENGENNGNNGNNGGNDANATRNN).

Belongs to the CNOT9 family. Subunit of the 1.0 MDa CCR4-NOT core complex that contains CCR4, CAF1, NOT1, NOT2, NOT3, NOT4, NOT5, CAF40 and CAF130. In the complex interacts with NOT1. The core complex probably is part of a less characterized 1.9 MDa CCR4-NOT complex.

The protein localises to the cytoplasm. It is found in the nucleus. In terms of biological role, acts as a component of the CCR4-NOT core complex, which in the nucleus seems to be a general transcription factor, and in the cytoplasm the major mRNA deadenylase involved in mRNA turnover. In Saccharomyces cerevisiae (strain ATCC 204508 / S288c) (Baker's yeast), this protein is Protein CAF40 (CAF40).